The primary structure comprises 635 residues: Endo-1,4-beta-xylanase B (635 aa).

The region spanning 1–337 is the GH10 domain; that stretch reads MNLKTAYEPY…KEAYYAVLKA (337 aa). Glu150 acts as the Proton donor in catalysis. The Nucleophile role is filled by Glu255.

This sequence belongs to the glycosyl hydrolase 10 (cellulase F) family.

The enzyme catalyses Endohydrolysis of (1-&gt;4)-beta-D-xylosidic linkages in xylans.. The protein operates within glycan degradation; xylan degradation. Functionally, b.fibrisolvens is located in the rumen of ruminant animals, where it contributes to the animal's digestion of plant material by hydrolyzing hemicellulose with its xylanases. In Butyrivibrio fibrisolvens, this protein is Endo-1,4-beta-xylanase B (xynB).